Reading from the N-terminus, the 380-residue chain is Crotonobetainyl-CoA reductase (380 aa).

This sequence belongs to the acyl-CoA dehydrogenase family. As to quaternary structure, homotetramer. The cofactor is FAD.

It is found in the cytoplasm. The catalysed reaction is 4-(trimethylamino)butanoyl-CoA + oxidized [electron-transfer flavoprotein] + H(+) = crotonobetainyl-CoA + reduced [electron-transfer flavoprotein]. The protein operates within amine and polyamine metabolism; carnitine metabolism. Its function is as follows. Catalyzes the reduction of crotonobetainyl-CoA to gamma-butyrobetainyl-CoA. The sequence is that of Crotonobetainyl-CoA reductase from Salmonella arizonae (strain ATCC BAA-731 / CDC346-86 / RSK2980).